The sequence spans 126 residues: Large ribosomal subunit protein uL22 (126 aa).

Belongs to the universal ribosomal protein uL22 family. In terms of assembly, part of the 50S ribosomal subunit.

Its function is as follows. This protein binds specifically to 23S rRNA; its binding is stimulated by other ribosomal proteins, e.g. L4, L17, and L20. It is important during the early stages of 50S assembly. It makes multiple contacts with different domains of the 23S rRNA in the assembled 50S subunit and ribosome. The globular domain of the protein is located near the polypeptide exit tunnel on the outside of the subunit, while an extended beta-hairpin is found that lines the wall of the exit tunnel in the center of the 70S ribosome. The chain is Large ribosomal subunit protein uL22 from Zymomonas mobilis subsp. mobilis (strain ATCC 31821 / ZM4 / CP4).